We begin with the raw amino-acid sequence, 102 residues long: Circadian clock protein KaiB3 (102 aa).

It belongs to the KaiB family. As to quaternary structure, purifies as a monomer and homotetramer. Interacts with KaiC1 and KaiC3.

Its function is as follows. A paralog of KaiB1, the major clock oscillator protein in this species. KaiB3 and KaiC3 may cross talk with the core oscillator. The monomer reduces the ATPase activity of KaiC3 by 55%, the homotetramer has no effect. A metamorphic protein which may reversibly switch between an inactive tetrameric fold and a rare thioredoxin-like monomeric fold (KaiB(fs)). The protein is Circadian clock protein KaiB3 of Synechocystis sp. (strain ATCC 27184 / PCC 6803 / Kazusa).